The following is a 205-amino-acid chain: Small ribosomal subunit protein mS26 (205 aa).

The N-terminal 27 residues, 1–27 (MLRALSRLGAGTPCRPRAPLVLPARGR), are a transit peptide targeting the mitochondrion.

Belongs to the mitochondrion-specific ribosomal protein mS26 family. As to quaternary structure, component of the mitochondrial small ribosomal subunit (mt-SSU). Mature mammalian 55S mitochondrial ribosomes consist of a small (28S) and a large (39S) subunit. The 28S small subunit contains a 12S ribosomal RNA (12S mt-rRNA) and 30 different proteins. The 39S large subunit contains a 16S rRNA (16S mt-rRNA), a copy of mitochondrial valine transfer RNA (mt-tRNA(Val)), which plays an integral structural role, and 52 different proteins.

The protein localises to the mitochondrion. The protein is Small ribosomal subunit protein mS26 (MRPS26) of Homo sapiens (Human).